We begin with the raw amino-acid sequence, 186 residues long: Lipid A palmitoyltransferase PagP (186 aa).

Residues 1–25 form the signal peptide; the sequence is MKVSKYVAIFFFVFIQLISVGKVFA. Residues histidine 58, aspartate 101, and serine 102 contribute to the active site.

It belongs to the lipid A palmitoyltransferase family. In terms of assembly, homodimer.

It is found in the cell outer membrane. It carries out the reaction lipid A (E. coli) + a 1-hexadecanoyl-2-acyl-sn-glycero-3-phosphocholine = hepta-acyl lipid A (E. coli) + a 2-acyl-sn-glycero-3-phosphocholine. The catalysed reaction is lipid IIA + a 1-hexadecanoyl-2-acyl-sn-glycero-3-phosphocholine = lipid IIB + a 2-acyl-sn-glycero-3-phosphocholine. The enzyme catalyses lipid IVA (E. coli) + a 1-hexadecanoyl-2-acyl-sn-glycero-3-phosphocholine = lipid IVB (E. coli) + a 2-acyl-sn-glycero-3-phosphocholine. Functionally, transfers a palmitate residue from the sn-1 position of a phospholipid to the N-linked hydroxymyristate on the proximal unit of lipid A or its precursors. This chain is Lipid A palmitoyltransferase PagP, found in Escherichia coli O6:K15:H31 (strain 536 / UPEC).